Reading from the N-terminus, the 317-residue chain is Ribosomal RNA small subunit methyltransferase A (317 aa).

S-adenosyl-L-methionine contacts are provided by Asn-37, Val-39, Gly-64, Glu-85, Asp-115, and Asn-134. A disordered region spans residues 293–317; that stretch reads GGSDEATSTGRDARAPDISGHASAS.

Belongs to the class I-like SAM-binding methyltransferase superfamily. rRNA adenine N(6)-methyltransferase family. RsmA subfamily.

It localises to the cytoplasm. The catalysed reaction is adenosine(1518)/adenosine(1519) in 16S rRNA + 4 S-adenosyl-L-methionine = N(6)-dimethyladenosine(1518)/N(6)-dimethyladenosine(1519) in 16S rRNA + 4 S-adenosyl-L-homocysteine + 4 H(+). Its function is as follows. Specifically dimethylates two adjacent adenosines (A1518 and A1519) in the loop of a conserved hairpin near the 3'-end of 16S rRNA in the 30S particle. May play a critical role in biogenesis of 30S subunits. This chain is Ribosomal RNA small subunit methyltransferase A, found in Mycobacterium bovis (strain BCG / Tokyo 172 / ATCC 35737 / TMC 1019).